The primary structure comprises 129 residues: MNTNVAFGKKGEDMASAFLKKCGYQILRRNYRSGNNEIDLITKKDNIVAFVEVKTRHNLNYGHPAEAVTLSKQKELIKAAQNFINDNPSQGVDYRFDVVAIILDESKRNAFNEPCEDIFFIEDAFRTLP.

This sequence belongs to the UPF0102 family.

The protein is UPF0102 protein Ctha_1382 of Chloroherpeton thalassium (strain ATCC 35110 / GB-78).